We begin with the raw amino-acid sequence, 856 residues long: Rab effector MyRIP (856 aa).

The RabBD domain maps to 4–124 (KLDLSGLTDD…TQSLEWFYNN (121 aa)). An FYVE-type zinc finger spans residues 63–105 (CCMRCCSPFTFLVNARRRCGECKFSVCKSCCSYQKHEKLWVCC). The tract at residues 143 to 560 (RKHRLESGAC…AQVSDNVSET (418 aa)) is myosin-binding. The tract at residues 193 to 209 (VALRVAEEAIEEAISKA) is PRKAR2A-binding. The negative regulation of PRKAR2A-binding stretch occupies residues 232–248 (LTEELAGTILQRIIRKQ). The interval 252–294 (AELRAEEEEPEWPRSQSGSVKARGEGTTAPPGRHKARATFRRS) is disordered. Phosphoserine occurs at positions 299 and 351. 4 disordered regions span residues 351–578 (SPDG…SVEE), 592–625 (SEKE…NNQG), 778–806 (RRDQ…PPVK), and 826–856 (LLQG…AVMY). Residues 395–405 (IGSDSEEDFDY) show a composition bias toward acidic residues. Composition is skewed to low complexity over residues 427–437 (PTQAQSSGQGP) and 450–460 (SDSETSSTSSS). The interval 495–856 (FNPQAAGGET…EPDLESAVMY (362 aa)) is actin-binding. Composition is skewed to polar residues over residues 551-574 (AQVS…SSTD), 613-625 (QKGS…NNQG), 784-793 (RSQVQTIDTS), and 826-840 (LLQG…ASTG).

In terms of assembly, binds RAB27A that has been activated by GTP-binding via its N-terminus. Binds MYO5A, MYO7A and F-actin. Interacts with PRKAR2A. Interacts with components of the exocyst complex, including EXOC3 and EXOC4. As to expression, detected in brain, skin, heart, lung, adrenal medulla, pancreas, intestine, liver, kidney, skeletal muscle and testis. Detected in cochlear and vestibular hair cells in the inner ear, and in photoreceptor and pigment epithelium cells in the retina.

Its subcellular location is the cytoplasm. It localises to the perinuclear region. The protein localises to the cytoplasmic vesicle. The protein resides in the secretory vesicle. It is found in the melanosome. Rab effector protein involved in melanosome transport. Serves as link between melanosome-bound RAB27A and the motor proteins MYO5A and MYO7A. May link RAB27A-containing vesicles to actin filaments. Functions as a protein kinase A-anchoring protein (AKAP). May act as a scaffolding protein that links PKA to components of the exocytosis machinery, thus facilitating exocytosis, including insulin release. The protein is Rab effector MyRIP (Myrip) of Mus musculus (Mouse).